Consider the following 151-residue polypeptide: Transcriptional regulator MraZ (151 aa).

SpoVT-AbrB domains lie at 5-52 (ANAV…PLDE) and 81-124 (AVDL…DEDA).

The protein belongs to the MraZ family. Forms oligomers.

It localises to the cytoplasm. Its subcellular location is the nucleoid. The sequence is that of Transcriptional regulator MraZ from Pseudomonas putida (strain ATCC 700007 / DSM 6899 / JCM 31910 / BCRC 17059 / LMG 24140 / F1).